Here is a 107-residue protein sequence, read N- to C-terminus: Flagellar hook-basal body complex protein FliE (107 aa).

Belongs to the FliE family.

Its subcellular location is the bacterial flagellum basal body. This is Flagellar hook-basal body complex protein FliE from Cupriavidus pinatubonensis (strain JMP 134 / LMG 1197) (Cupriavidus necator (strain JMP 134)).